Consider the following 205-residue polypeptide: Large ribosomal subunit protein uL4 (205 aa).

Residues 53 to 77 form a disordered region; it reads RAAVRGGGRKPWKQKGTGRARAGSI. Residues 59–70 show a composition bias toward basic residues; the sequence is GGRKPWKQKGTG.

Belongs to the universal ribosomal protein uL4 family. As to quaternary structure, part of the 50S ribosomal subunit.

Functionally, one of the primary rRNA binding proteins, this protein initially binds near the 5'-end of the 23S rRNA. It is important during the early stages of 50S assembly. It makes multiple contacts with different domains of the 23S rRNA in the assembled 50S subunit and ribosome. Its function is as follows. Forms part of the polypeptide exit tunnel. This chain is Large ribosomal subunit protein uL4, found in Acidithiobacillus ferrooxidans (strain ATCC 23270 / DSM 14882 / CIP 104768 / NCIMB 8455) (Ferrobacillus ferrooxidans (strain ATCC 23270)).